We begin with the raw amino-acid sequence, 198 residues long: Pyridoxine/pyridoxamine 5'-phosphate oxidase (198 aa).

FMN is bound by residues 47–52, 62–63, R68, K69, and Q91; these read RMVLVK and FT. Residue K52 participates in substrate binding. Residues Y109, R113, and S117 each contribute to the substrate site. FMN is bound by residues 126 to 127 and W171; that span reads QS. A substrate-binding site is contributed by 177 to 179; that stretch reads RLH. Position 181 (R181) interacts with FMN.

It belongs to the pyridoxamine 5'-phosphate oxidase family. As to quaternary structure, homodimer. FMN serves as cofactor.

It catalyses the reaction pyridoxamine 5'-phosphate + O2 + H2O = pyridoxal 5'-phosphate + H2O2 + NH4(+). The enzyme catalyses pyridoxine 5'-phosphate + O2 = pyridoxal 5'-phosphate + H2O2. It participates in cofactor metabolism; pyridoxal 5'-phosphate salvage; pyridoxal 5'-phosphate from pyridoxamine 5'-phosphate: step 1/1. It functions in the pathway cofactor metabolism; pyridoxal 5'-phosphate salvage; pyridoxal 5'-phosphate from pyridoxine 5'-phosphate: step 1/1. Catalyzes the oxidation of either pyridoxine 5'-phosphate (PNP) or pyridoxamine 5'-phosphate (PMP) into pyridoxal 5'-phosphate (PLP). The protein is Pyridoxine/pyridoxamine 5'-phosphate oxidase of Anaeromyxobacter dehalogenans (strain 2CP-C).